A 461-amino-acid chain; its full sequence is Argininosuccinate lyase (461 aa).

It belongs to the lyase 1 family. Argininosuccinate lyase subfamily.

The protein localises to the cytoplasm. It catalyses the reaction 2-(N(omega)-L-arginino)succinate = fumarate + L-arginine. It participates in amino-acid biosynthesis; L-arginine biosynthesis; L-arginine from L-ornithine and carbamoyl phosphate: step 3/3. This is Argininosuccinate lyase from Laribacter hongkongensis (strain HLHK9).